Consider the following 827-residue polypeptide: Glycerol-3-phosphate acyltransferase (827 aa).

The short motif at 309-314 is the HXXXXD motif element; it reads CHRSHI.

The protein belongs to the GPAT/DAPAT family.

The protein localises to the cell inner membrane. It catalyses the reaction sn-glycerol 3-phosphate + an acyl-CoA = a 1-acyl-sn-glycero-3-phosphate + CoA. Its pathway is phospholipid metabolism; CDP-diacylglycerol biosynthesis; CDP-diacylglycerol from sn-glycerol 3-phosphate: step 1/3. The sequence is that of Glycerol-3-phosphate acyltransferase from Ectopseudomonas mendocina (strain ymp) (Pseudomonas mendocina).